The following is a 131-amino-acid chain: MAKRNVTAKKKVVKKNIARGVVYISATFNNTNITITDEMGNVICWSTAGGLGFKGSKKSTPYAAQQAVESALSKAKEHGVKEVGIKVQGPGSGRETAIKSVGTTEGVKVLWIKDITPLPHNGCRPPKRRRV.

Belongs to the universal ribosomal protein uS11 family. Part of the 30S ribosomal subunit. Interacts with proteins S7 and S18. Binds to IF-3.

Its function is as follows. Located on the platform of the 30S subunit, it bridges several disparate RNA helices of the 16S rRNA. Forms part of the Shine-Dalgarno cleft in the 70S ribosome. This is Small ribosomal subunit protein uS11 from Helicobacter pylori (strain Shi470).